A 404-amino-acid polypeptide reads, in one-letter code: Glucose-1-phosphate adenylyltransferase 2 (404 aa).

Alpha-D-glucose 1-phosphate contacts are provided by residues Y97, G162, 177-178 (EK), and S195.

It belongs to the bacterial/plant glucose-1-phosphate adenylyltransferase family. Homotetramer.

The enzyme catalyses alpha-D-glucose 1-phosphate + ATP + H(+) = ADP-alpha-D-glucose + diphosphate. The protein operates within glycan biosynthesis; glycogen biosynthesis. In terms of biological role, involved in the biosynthesis of ADP-glucose, a building block required for the elongation reactions to produce glycogen. Catalyzes the reaction between ATP and alpha-D-glucose 1-phosphate (G1P) to produce pyrophosphate and ADP-Glc. The protein is Glucose-1-phosphate adenylyltransferase 2 of Vibrio parahaemolyticus serotype O3:K6 (strain RIMD 2210633).